Consider the following 508-residue polypeptide: Ribonuclease Y (508 aa).

A helical transmembrane segment spans residues Ile2 to Ile22. One can recognise a KH domain in the interval Thr198–Leu261. The HD domain maps to Val324 to Ala417.

This sequence belongs to the RNase Y family.

Its subcellular location is the cell membrane. In terms of biological role, endoribonuclease that initiates mRNA decay. This is Ribonuclease Y from Thermoanaerobacter pseudethanolicus (strain ATCC 33223 / 39E) (Clostridium thermohydrosulfuricum).